The sequence spans 340 residues: Mitochondrial glycine transporter (340 aa).

Solcar repeat units lie at residues 23 to 108 (PKTL…ARNG), 128 to 218 (LSPF…FKND), and 237 to 325 (RSTI…LIKS). 6 helical membrane passes run 29–54 (LISGASAGLISAISLQPFDLLKTRLQ), 83–109 (GALPSTLRTSVGAGLYFTILSSARNGI), 134–159 (LATGFIVRAVVGIITMPITIVKTRYE), 193–216 (GSFATLARDCPYAGMYVLFYELFK), 241–267 (INTSAAILAASVSTTITAPFDAIKTRL), and 300–318 (GLSLRFGRKGLSSGISWCI).

The protein belongs to the mitochondrial carrier (TC 2.A.29) family. SLC25A38 subfamily.

The protein localises to the mitochondrion inner membrane. It catalyses the reaction glycine(in) = glycine(out). Mitochondrial glycine transporter that imports glycine into the mitochondrial matrix. Plays an important role in providing glycine for the first enzymatic step in heme biosynthesis, the condensation of glycine with succinyl-CoA to produce 5-aminolevulinate (ALA) in the mitochondrial matrix. This Debaryomyces hansenii (strain ATCC 36239 / CBS 767 / BCRC 21394 / JCM 1990 / NBRC 0083 / IGC 2968) (Yeast) protein is Mitochondrial glycine transporter.